An 89-amino-acid polypeptide reads, in one-letter code: Small ribosomal subunit protein uS15 (89 aa).

This sequence belongs to the universal ribosomal protein uS15 family. Part of the 30S ribosomal subunit. Forms a bridge to the 50S subunit in the 70S ribosome, contacting the 23S rRNA.

Functionally, one of the primary rRNA binding proteins, it binds directly to 16S rRNA where it helps nucleate assembly of the platform of the 30S subunit by binding and bridging several RNA helices of the 16S rRNA. Forms an intersubunit bridge (bridge B4) with the 23S rRNA of the 50S subunit in the ribosome. The polypeptide is Small ribosomal subunit protein uS15 (Brevibacillus brevis (strain 47 / JCM 6285 / NBRC 100599)).